The chain runs to 434 residues: Chaperone SurA (434 aa).

The first 20 residues, 1-20, serve as a signal peptide directing secretion; that stretch reads MKNWRTLILGLVICANTAFA. PpiC domains are found at residues 171 to 272 and 282 to 382; these read DTEL…KVND and VTEV…QLVD.

The protein localises to the periplasm. The enzyme catalyses [protein]-peptidylproline (omega=180) = [protein]-peptidylproline (omega=0). Its function is as follows. Chaperone involved in the correct folding and assembly of outer membrane proteins. Recognizes specific patterns of aromatic residues and the orientation of their side chains, which are found more frequently in integral outer membrane proteins. May act in both early periplasmic and late outer membrane-associated steps of protein maturation. In Yersinia pestis bv. Antiqua (strain Antiqua), this protein is Chaperone SurA.